The primary structure comprises 137 residues: Large ribosomal subunit protein uL16 (137 aa).

This sequence belongs to the universal ribosomal protein uL16 family. In terms of assembly, part of the 50S ribosomal subunit.

Functionally, binds 23S rRNA and is also seen to make contacts with the A and possibly P site tRNAs. This is Large ribosomal subunit protein uL16 from Spiroplasma citri.